We begin with the raw amino-acid sequence, 300 residues long: MAFLKKYLLTILMVFLAYYYYSANEKFRPEMLQGKKVIVTGASKGIGREIAYHLAKMGAHVVVTARSKEALQKVVARCLELGAASAHYIAGSMEDMTFAEEFVAEAGNLMGGLDMLILNHVLYNRLTFFHGEIDNVRKSMEVNFHSFVVLSVAAMPMLMQSQGSIAVVSSVAGKITYPLIAPYSASKFALDGFFSTLRSEFLVNKVNVSITLCILGLIDTETAIKATSGIYLGPASPKEECALEIIKGTALRQDEMYYVGSRWVPYLLGNPGRKIMEFLSAAEYNWDNVLSNEKLYGRWA.

Residues 1-7 (MAFLKKY) are Cytoplasmic-facing. Residues 8–24 (LLTILMVFLAYYYYSAN) form a helical; Signal-anchor for type II membrane protein membrane-spanning segment. The Lumenal portion of the chain corresponds to 25-300 (EKFRPEMLQG…SNEKLYGRWA (276 aa)). Residues 41 to 67 (GASK…TARS), 92 to 93 (SM), and 119 to 123 (NHVLY) contribute to the NADP(+) site. Ser170 serves as a coordination point for substrate. Tyr183 serves as the catalytic Proton acceptor. An NADP(+)-binding site is contributed by 183–187 (YSASK). N-linked (GlcNAc...) asparagine glycosylation is present at Asn207. 218–222 (IDTET) contacts NADP(+).

The protein belongs to the short-chain dehydrogenases/reductases (SDR) family. As to quaternary structure, homodimer. As to expression, widely expressed in all peripheral tissues, with highest expression in liver, followed by kidney and lung, and very low expression in heart, lung, spleen, stomach, small intestine, colon, skin, skeletal muscle, and ovary.

The protein localises to the endoplasmic reticulum membrane. The catalysed reaction is an 11beta-hydroxysteroid + NADP(+) = an 11-oxosteroid + NADPH + H(+). It carries out the reaction cortisone + NADPH + H(+) = cortisol + NADP(+). The enzyme catalyses corticosterone + NADP(+) = 11-dehydrocorticosterone + NADPH + H(+). It catalyses the reaction a 7beta-hydroxysteroid + NADP(+) = a 7-oxosteroid + NADPH + H(+). The catalysed reaction is 7-oxocholesterol + NADPH + H(+) = 7beta-hydroxycholesterol + NADP(+). It carries out the reaction chenodeoxycholate + NADP(+) = 7-oxolithocholate + NADPH + H(+). The enzyme catalyses 7-oxolithocholate + NADPH + H(+) = ursodeoxycholate + NADP(+). It catalyses the reaction glycochenodeoxycholate + NADP(+) = 7-oxoglycolithocholate + NADPH + H(+). The catalysed reaction is taurochenodeoxycholate + NADP(+) = 7-oxotaurolithocholate + NADPH + H(+). It carries out the reaction tauroursodeoxycholate + NADP(+) = 7-oxotaurolithocholate + NADPH + H(+). The enzyme catalyses glycoursodeoxycholate + NADP(+) = 7-oxoglycolithocholate + NADPH + H(+). It catalyses the reaction 7-oxopregnenolone + NADPH + H(+) = 7beta-hydroxypregnenolone + NADP(+). The catalysed reaction is 3beta,7alpha-dihydroxyandrost-5-en-17-one + NADP(+) = 3beta-hydroxy-5-androstene-7,17-dione + NADPH + H(+). It carries out the reaction 3beta-hydroxy-5-androstene-7,17-dione + NADPH + H(+) = 3beta,7beta-dihydroxyandrost-5-en-17-one + NADP(+). The enzyme catalyses 3beta-hydroxy-5alpha-androstane-7,17-dione + NADPH + H(+) = 3beta,7beta-dihydroxy-5alpha-androstan-17-one + NADP(+). In terms of biological role, controls the reversible conversion of biologically active glucocorticoids such as cortisone to cortisol, and 11-dehydrocorticosterone to corticosterone in the presence of NADP(H). Participates in the corticosteroid receptor-mediated anti-inflammatory response, as well as metabolic and homeostatic processes. Bidirectional in vitro, predominantly functions as a reductase in vivo, thereby increasing the concentration of active glucocorticoids. It has broad substrate specificity, besides glucocorticoids, it accepts other steroid and sterol substrates. Interconverts 7-oxo- and 7-hydroxy-neurosteroids such as 7-oxopregnenolone and 7beta-hydroxypregnenolone, 7-oxodehydroepiandrosterone (3beta-hydroxy-5-androstene-7,17-dione) and 7beta-hydroxydehydroepiandrosterone (3beta,7beta-dihydroxyandrost-5-en-17-one), among others. Catalyzes the stereo-specific conversion of the major dietary oxysterol, 7-ketocholesterol (7-oxocholesterol), into the more polar 7-beta-hydroxycholesterol metabolite. 7-oxocholesterol is one of the most important oxysterols, it participates in several events such as induction of apoptosis, accumulation in atherosclerotic lesions, lipid peroxidation, and induction of foam cell formation. Mediates the 7-oxo reduction of 7-oxolithocholate mainly to chenodeoxycholate, and to a lesser extent to ursodeoxycholate, both in its free form and when conjugated to glycine or taurine, providing a link between glucocorticoid activation and bile acid metabolism. Catalyzes the synthesis of 7-beta-25-dihydroxycholesterol from 7-oxo-25-hydroxycholesterol in vitro, which acts as a ligand for the G-protein-coupled receptor (GPCR) Epstein-Barr virus-induced gene 2 (EBI2) and may thereby regulate immune cell migration. The protein is 11-beta-hydroxysteroid dehydrogenase 1 (HSD11B1) of Cavia porcellus (Guinea pig).